Reading from the N-terminus, the 125-residue chain is Snaclec coagulation factor IX/factor X-binding protein subunit B (125 aa).

The C-type lectin domain occupies 1–122 (DCSSGWTAYG…SLFGHFVCKS (122 aa)). Cystine bridges form between C2-C13, C30-C120, and C97-C112. Positions 41 and 47 each coordinate Ca(2+).

Belongs to the snaclec family. In terms of assembly, heterodimer of subunits A and B; disulfide-linked. As to expression, expressed by the venom gland.

It is found in the secreted. Anticoagulant protein which binds to coagulation factor IX (F9) and coagulation factor X (F10) in the presence of calcium. It may bind the gamma-carboxyglutamic acid-domain regions of factors with a 1 to 1 stoichiometry. The dissociation constant (K(d)) are 6.6 nM for factor IX (F9) and 125 nM for factor X (F10). Does not bind carbohydrates. This chain is Snaclec coagulation factor IX/factor X-binding protein subunit B, found in Echis carinatus (Saw-scaled viper).